The primary structure comprises 705 residues: Elongation factor G (705 aa).

The tr-type G domain occupies 8 to 290 (ERYRNFGIMA…GVVHLLPSPA (283 aa)). Residues 17–24 (AHIDAGKT), 88–92 (DTPGH), and 142–145 (NKMD) contribute to the GTP site. Residues 290 to 309 (ADRPPVQGIDEDEKEDTRAA) are disordered.

Belongs to the TRAFAC class translation factor GTPase superfamily. Classic translation factor GTPase family. EF-G/EF-2 subfamily.

It localises to the cytoplasm. In terms of biological role, catalyzes the GTP-dependent ribosomal translocation step during translation elongation. During this step, the ribosome changes from the pre-translocational (PRE) to the post-translocational (POST) state as the newly formed A-site-bound peptidyl-tRNA and P-site-bound deacylated tRNA move to the P and E sites, respectively. Catalyzes the coordinated movement of the two tRNA molecules, the mRNA and conformational changes in the ribosome. The polypeptide is Elongation factor G (Xanthomonas oryzae pv. oryzae (strain MAFF 311018)).